Here is a 363-residue protein sequence, read N- to C-terminus: G-protein coupled receptor 78 (363 aa).

Residues 1–7 lie on the Extracellular side of the membrane; the sequence is MGPGEAL. The chain crosses the membrane as a helical span at residues 8–28; it reads LAGLLVMVLAVALLSNALVLL. At 29-47 the chain is on the cytoplasmic side; it reads CCAYSAELRTRASGVLLVN. Residues 48–68 form a helical membrane-spanning segment; it reads LSLGHLLLAALDMPFTLLGVM. The Extracellular portion of the chain corresponds to 69-80; that stretch reads RGRTPSAPGACQ. A disulfide bond links cysteine 79 and cysteine 156. Residues 81–101 form a helical membrane-spanning segment; the sequence is VIGFLDTFLASNAALSVAALS. The Cytoplasmic segment spans residues 102 to 122; it reads ADQWLAVGFPLRYAGRLRPRY. The chain crosses the membrane as a helical span at residues 123–143; it reads AGLLLGCAWGQSLAFSGAALG. Topologically, residues 144 to 168 are extracellular; it reads CSWLGYSSAFASCSLRLPPEPERPR. The helical transmembrane segment at 169-189 threads the bilayer; it reads FAAFTATLHAVGFVLPLAVLC. Over 190 to 242 the chain is Cytoplasmic; it reads LTSLQVHRVARRHCQRMDTVTMKALALLADLHPSVRQRCLIQQKRRRHRATRK. A helical transmembrane segment spans residues 243-263; sequence IGIAIATFLICFAPYVMTRLA. Topologically, residues 264-277 are extracellular; that stretch reads ELVPFVTVNAQWGI. Residues 278–297 form a helical membrane-spanning segment; sequence LSKCLTYSKAVADPFTYSLL. At 298 to 363 the chain is on the cytoplasmic side; sequence RRPFRQVLAG…ENDSCLQQTH (66 aa). A disordered region spans residues 340-363; the sequence is TPRPASTHNGSVDTENDSCLQQTH. A compositionally biased stretch (polar residues) spans 343-363; it reads PASTHNGSVDTENDSCLQQTH.

This sequence belongs to the G-protein coupled receptor 1 family. As to expression, high level of expression in placenta. Expressed throughout the brain at low level. No expression detected in skeletal muscle, lung, heart, liver, pancreas, or kidney.

The protein resides in the cell membrane. Orphan receptor. Displays a significant level of constitutive activity. Its effect is mediated by G(s)-alpha protein that stimulate adenylate cyclase, resulting in an elevation of intracellular cAMP. This chain is G-protein coupled receptor 78 (GPR78), found in Homo sapiens (Human).